Here is a 128-residue protein sequence, read N- to C-terminus: Large ribosomal subunit protein bL17 (128 aa).

Belongs to the bacterial ribosomal protein bL17 family. As to quaternary structure, part of the 50S ribosomal subunit. Contacts protein L32.

This Petrotoga mobilis (strain DSM 10674 / SJ95) protein is Large ribosomal subunit protein bL17.